The sequence spans 323 residues: L-lactate dehydrogenase 1 (323 aa).

NAD(+)-binding positions include Val17, Asp38, Arg43, Tyr68, and 82 to 83 (GA). Positions 85 and 91 each coordinate substrate. Residues Ser104, 121-123 (AAN), and Ser146 each bind NAD(+). 123–126 (NPVD) lines the substrate pocket. 151–154 (DTGR) contributes to the substrate binding site. The active-site Proton acceptor is His178. Tyr223 is subject to Phosphotyrosine. Thr232 lines the substrate pocket.

Belongs to the LDH/MDH superfamily. LDH family. Homotetramer.

Its subcellular location is the cytoplasm. The catalysed reaction is (S)-lactate + NAD(+) = pyruvate + NADH + H(+). Its pathway is fermentation; pyruvate fermentation to lactate; (S)-lactate from pyruvate: step 1/1. Catalyzes the conversion of lactate to pyruvate. This chain is L-lactate dehydrogenase 1, found in Lactobacillus johnsonii (strain CNCM I-12250 / La1 / NCC 533).